Consider the following 99-residue polypeptide: MSRACELTGKSVQYGNNVSHANNKTRRRFLPNLCNVTLMSETLGQSYRLRVSANALRSVEHRGGLDAFLVKSDDKELSQRARLLKRQIAKKQAEAAVAA.

This sequence belongs to the bacterial ribosomal protein bL28 family.

In Brucella anthropi (strain ATCC 49188 / DSM 6882 / CCUG 24695 / JCM 21032 / LMG 3331 / NBRC 15819 / NCTC 12168 / Alc 37) (Ochrobactrum anthropi), this protein is Large ribosomal subunit protein bL28.